The following is a 140-amino-acid chain: Ribosome-binding factor A (140 aa).

Positions 118 to 133 (DEAKQQKHNGKDKTDT) are enriched in basic and acidic residues. The tract at residues 118-140 (DEAKQQKHNGKDKTDTADSEGEE) is disordered.

This sequence belongs to the RbfA family. As to quaternary structure, monomer. Binds 30S ribosomal subunits, but not 50S ribosomal subunits or 70S ribosomes.

It is found in the cytoplasm. Its function is as follows. One of several proteins that assist in the late maturation steps of the functional core of the 30S ribosomal subunit. Associates with free 30S ribosomal subunits (but not with 30S subunits that are part of 70S ribosomes or polysomes). Required for efficient processing of 16S rRNA. May interact with the 5'-terminal helix region of 16S rRNA. In Shewanella woodyi (strain ATCC 51908 / MS32), this protein is Ribosome-binding factor A.